The following is a 257-amino-acid chain: Hydroxyacylglutathione hydrolase (257 aa).

7 residues coordinate Zn(2+): histidine 53, histidine 55, aspartate 57, histidine 58, histidine 109, aspartate 126, and histidine 164.

Belongs to the metallo-beta-lactamase superfamily. Glyoxalase II family. In terms of assembly, monomer. It depends on Zn(2+) as a cofactor.

The enzyme catalyses an S-(2-hydroxyacyl)glutathione + H2O = a 2-hydroxy carboxylate + glutathione + H(+). It participates in secondary metabolite metabolism; methylglyoxal degradation; (R)-lactate from methylglyoxal: step 2/2. Thiolesterase that catalyzes the hydrolysis of S-D-lactoyl-glutathione to form glutathione and D-lactic acid. The chain is Hydroxyacylglutathione hydrolase from Baumannia cicadellinicola subsp. Homalodisca coagulata.